The chain runs to 101 residues: Small ribosomal subunit protein uS14 (101 aa).

This sequence belongs to the universal ribosomal protein uS14 family. As to quaternary structure, part of the 30S ribosomal subunit. Contacts proteins S3 and S10.

Its function is as follows. Binds 16S rRNA, required for the assembly of 30S particles and may also be responsible for determining the conformation of the 16S rRNA at the A site. The chain is Small ribosomal subunit protein uS14 from Stenotrophomonas maltophilia (strain K279a).